The following is a 678-amino-acid chain: Secretin ExeD (678 aa).

An N-terminal signal peptide occupies residues 1-25 (MINKGKGWRLATVAAALMMAGSAWA). An N0 region spans residues 26–122 (TEYSASFKNA…VVDETNPGIG (97 aa)). The tract at residues 124–188 (EMVTRVVPVR…EVVRRVDKAG (65 aa)) is N1. The segment at 189–264 (DQEVDIIKLK…MVRQLDRDLQ (76 aa)) is N2. Residues 267 to 348 (GNTRVFYLKY…ELEQVVAKLD (82 aa)) form an N3 region. The segment at 353–602 (QVLVEAIIVE…VFIRPTILRD (250 aa)) is secretin. The interval 604–678 (NVYSGISSNK…GVQPFVQGNK (75 aa)) is s domain.

Belongs to the bacterial secretin family. GSP D subfamily. As to quaternary structure, forms a cylindrical channel with 15 subunits.

It is found in the cell outer membrane. Functionally, involved in a type II secretion system (T2SS, formerly general secretion pathway, GSP) for the export of proteins. This subunit forms the outer membrane channel. The chain is Secretin ExeD (exeD) from Aeromonas hydrophila.